The primary structure comprises 318 residues: UAP56-interacting factor (318 aa).

Residue Met-1 is modified to N-acetylmethionine. A disordered region spans residues 1 to 27 (MNRFSTRLMGATATPPPAPPKARSNEN). A Phosphothreonine modification is found at Thr-14. At Ser-24 the chain carries Phosphoserine. The short motif at 27-45 (NLDKIDMSLDDIIKLNRKE) is the UAP56-binding motif element. Phosphoserine occurs at positions 61 and 118. Lys-140 is covalently cross-linked (Glycyl lysine isopeptide (Lys-Gly) (interchain with G-Cter in SUMO1)). A compositionally biased stretch (polar residues) spans 163–180 (LNRKNNIPNNFTRSGNKL). The segment at 163–183 (LNRKNNIPNNFTRSGNKLSHQ) is disordered. Residue Lys-261 forms a Glycyl lysine isopeptide (Lys-Gly) (interchain with G-Cter in SUMO2) linkage.

It belongs to the UIF family. Interacts with DDX39B/UAP56 and NXF1; interaction with DDX39B/UAP56 and NXF1 are mutually exclusive. Interacts with SSRP1; required for its recruitment to mRNAs. Interacts with CHTOP.

It is found in the nucleus. It localises to the nucleoplasm. Its subcellular location is the nucleus speckle. Required for mRNA export from the nucleus to the cytoplasm. Acts as an adapter that uses the DDX39B/UAP56-NFX1 pathway to ensure efficient mRNA export and delivering to the nuclear pore. Associates with spliced and unspliced mRNAs simultaneously with ALYREF/THOC4. The chain is UAP56-interacting factor (FYTTD1) from Bos taurus (Bovine).